We begin with the raw amino-acid sequence, 540 residues long: Pentatricopeptide repeat-containing protein At3g29290 (540 aa).

12 PPR repeats span residues 106–140, 141–175, 177–205, 213–247, 248–282, 283–317, 318–352, 353–387, 389–423, 424–458, 459–487, and 489–523; these read NEET…GLQP, NAHA…ENVT, HTYS…LERE, DVVL…GHIG, TEIT…KISL, REDA…GMKP, NLVA…GHKP, DEYT…NLCC, NEYL…GLTV, STSS…DCKP, NTFT…KKVE, and DVSL…GLEP.

The protein belongs to the PPR family. P subfamily.

The sequence is that of Pentatricopeptide repeat-containing protein At3g29290 (EMB2076) from Arabidopsis thaliana (Mouse-ear cress).